The sequence spans 228 residues: HTH-type transcriptional activator FasR (228 aa).

The disordered stretch occupies residues 1–39 (MSDLAKTAQRRALRSSGSARPDEDVPAPNRRGNRLPRDE). The HTH tetR-type domain occupies 38 to 98 (DERRGQLLVV…AVLHRHVENL (61 aa)). Positions 61 to 80 (GMDEIADRAGVSKPVLYQHF) form a DNA-binding region, H-T-H motif.

As to quaternary structure, homodimer.

FasR:DNA binding is regulated by long-chain acyl-CoAs (C14- to C26-CoA), which act as effector molecules that modulate the affinity of FasR for its DNA binding sequences and therefore modulate the expression of the essential fas-acpS operon. FasR activity is not affected by mycolic acid biosynthesis intermediates. Functionally, transcriptional activator that plays a central role in sensing mycobacterial long-chain fatty acids and regulating lipid biosynthesis. Activates the expression of the genes encoding the fatty acid synthase (fas) and the 4-phosphopantetheinyl transferase (acpS), whose products are involved in the fatty acid and mycolic acid biosynthesis. Specifically binds to three conserved operator sequences present in the fas-acpS promoter region. Not essential for M.tuberculosis viability, although it is required for the optimal growth in vitro and for virulence in macrophages and in a mouse model of infection. This is HTH-type transcriptional activator FasR from Mycobacterium tuberculosis (strain ATCC 25618 / H37Rv).